The chain runs to 368 residues: Endophilin-A2 (368 aa).

Residues 1-21 (MSVAGLKKQFYKASQLVSEKV) form a membrane-binding amphipathic helix region. Residues 18-249 (SEKVGGAEGT…LKRRMREASS (232 aa)) enclose the BAR domain. Residues 60-87 (PNPASRAKLTMLNTVSKIRGQVKNPGYP) form a required for dimerization upon membrane association region. A coiled-coil region spans residues 181–250 (EELRQAMEKF…KRRMREASSR (70 aa)). Positions 218–254 (LVDAQLDYHRQAVQILDELADKLKRRMREASSRPKRE) are interaction with ARC. Positions 243 to 308 (RMREASSRPK…PSRSMPPLDQ (66 aa)) are disordered. Over residues 245-263 (REASSRPKREYKPKPRELL) the composition is skewed to basic and acidic residues. 2 positions are modified to phosphoserine: Ser288 and Ser292. Thr298 carries the phosphothreonine modification. In terms of domain architecture, SH3 spans 306–365 (LDQPSCKALYDFEPENDGELGFHEGDIITLTNQIDENWYEGMLDGQSGFFPLSYVEVLVP). Tyr315 carries the post-translational modification Phosphotyrosine.

It belongs to the endophilin family. As to quaternary structure, interacts with ARC, SYNJ1 and DNM1. Interacts with PDCD6IP. Interacts with BIN2.

It is found in the cytoplasm. It localises to the early endosome membrane. The protein resides in the cell projection. The protein localises to the podosome. Functionally, implicated in endocytosis. May recruit other proteins to membranes with high curvature. In Bos taurus (Bovine), this protein is Endophilin-A2.